A 522-amino-acid polypeptide reads, in one-letter code: Coiled-coil domain-containing protein 149-B (522 aa).

2 coiled-coil regions span residues Met-1–Lys-196 and Ile-260–Ser-287. The disordered stretch occupies residues Ala-413 to Ser-522. Polar residues-rich tracts occupy residues Gly-429–Ala-438, Gln-467–Gln-490, and Ala-503–Ser-522.

The protein belongs to the CCDC149 family.

This is Coiled-coil domain-containing protein 149-B (ccdc149b) from Danio rerio (Zebrafish).